The chain runs to 378 residues: Probable pectin lyase A (378 aa).

A signal peptide spans 1-18; sequence MKYQGLLAIAGCIASASA. 2 disulfide bridges follow: C81–C100 and C90–C224. Residue N127 is glycosylated (N-linked (GlcNAc...) asparagine). Residue R254 is part of the active site. A disulfide bridge connects residues C321 and C329.

It belongs to the polysaccharide lyase 1 family.

It localises to the secreted. The catalysed reaction is Eliminative cleavage of (1-&gt;4)-alpha-D-galacturonan methyl ester to give oligosaccharides with 4-deoxy-6-O-methyl-alpha-D-galact-4-enuronosyl groups at their non-reducing ends.. Its function is as follows. Pectinolytic enzymes consist of four classes of enzymes: pectin lyase, polygalacturonase, pectin methylesterase and rhamnogalacturonase. Among pectinolytic enzymes, pectin lyase is the most important in depolymerization of pectin, since it cleaves internal glycosidic bonds of highly methylated pectins. The protein is Probable pectin lyase A (pelA) of Neosartorya fischeri (strain ATCC 1020 / DSM 3700 / CBS 544.65 / FGSC A1164 / JCM 1740 / NRRL 181 / WB 181) (Aspergillus fischerianus).